The sequence spans 155 residues: Large ribosomal subunit protein eL24A (155 aa).

Ser7 bears the Phosphoserine mark. The tract at residues 66 to 155 (EVAKKRSRKT…AFQKVAATSR (90 aa)) is disordered. Over residues 89–129 (LIKERRSLKPEVRKANREEKLKANKEKKKAEKAARKAEKAK) the composition is skewed to basic and acidic residues. The segment covering 131 to 142 (AGTQSSKFSKQQ) has biased composition (polar residues).

Belongs to the eukaryotic ribosomal protein eL24 family. Component of the large ribosomal subunit (LSU). Mature yeast ribosomes consist of a small (40S) and a large (60S) subunit. The 40S small subunit contains 1 molecule of ribosomal RNA (18S rRNA) and 33 different proteins (encoded by 57 genes). The large 60S subunit contains 3 rRNA molecules (25S, 5.8S and 5S rRNA) and 46 different proteins (encoded by 81 genes).

It is found in the cytoplasm. Its function is as follows. Component of the ribosome, a large ribonucleoprotein complex responsible for the synthesis of proteins in the cell. The small ribosomal subunit (SSU) binds messenger RNAs (mRNAs) and translates the encoded message by selecting cognate aminoacyl-transfer RNA (tRNA) molecules. The large subunit (LSU) contains the ribosomal catalytic site termed the peptidyl transferase center (PTC), which catalyzes the formation of peptide bonds, thereby polymerizing the amino acids delivered by tRNAs into a polypeptide chain. The nascent polypeptides leave the ribosome through a tunnel in the LSU and interact with protein factors that function in enzymatic processing, targeting, and the membrane insertion of nascent chains at the exit of the ribosomal tunnel. The protein is Large ribosomal subunit protein eL24A of Saccharomyces cerevisiae (strain ATCC 204508 / S288c) (Baker's yeast).